The sequence spans 236 residues: Phosphatidylserine decarboxylase proenzyme (236 aa).

The active-site Schiff-base intermediate with substrate; via pyruvic acid is the Ser194. A Pyruvic acid (Ser); by autocatalysis modification is found at Ser194.

Belongs to the phosphatidylserine decarboxylase family. PSD-A subfamily. Heterodimer of a large membrane-associated beta subunit and a small pyruvoyl-containing alpha subunit. It depends on pyruvate as a cofactor. Is synthesized initially as an inactive proenzyme. Formation of the active enzyme involves a self-maturation process in which the active site pyruvoyl group is generated from an internal serine residue via an autocatalytic post-translational modification. Two non-identical subunits are generated from the proenzyme in this reaction, and the pyruvate is formed at the N-terminus of the alpha chain, which is derived from the carboxyl end of the proenzyme. The post-translation cleavage follows an unusual pathway, termed non-hydrolytic serinolysis, in which the side chain hydroxyl group of the serine supplies its oxygen atom to form the C-terminus of the beta chain, while the remainder of the serine residue undergoes an oxidative deamination to produce ammonia and the pyruvoyl prosthetic group on the alpha chain.

The protein localises to the cell membrane. The enzyme catalyses a 1,2-diacyl-sn-glycero-3-phospho-L-serine + H(+) = a 1,2-diacyl-sn-glycero-3-phosphoethanolamine + CO2. It participates in phospholipid metabolism; phosphatidylethanolamine biosynthesis; phosphatidylethanolamine from CDP-diacylglycerol: step 2/2. Its function is as follows. Catalyzes the formation of phosphatidylethanolamine (PtdEtn) from phosphatidylserine (PtdSer). This Rhodospirillum rubrum (strain ATCC 11170 / ATH 1.1.1 / DSM 467 / LMG 4362 / NCIMB 8255 / S1) protein is Phosphatidylserine decarboxylase proenzyme.